A 375-amino-acid polypeptide reads, in one-letter code: Fructose-1,6-bisphosphate aldolase/phosphatase (375 aa).

Catalysis depends on D15, which acts as the Proton acceptor; for FBP phosphatase activity. Mg(2+) is bound by residues D15, H22, D56, and D57. H22 provides a ligand contact to beta-D-fructose 1,6-bisphosphate. H22 is a binding site for dihydroxyacetone phosphate. Y94 serves as a coordination point for beta-D-fructose 1,6-bisphosphate. Q98 is a Mg(2+) binding site. 107-108 (GN) provides a ligand contact to beta-D-fructose 1,6-bisphosphate. A Mg(2+)-binding site is contributed by D135. Beta-D-fructose 1,6-bisphosphate is bound at residue K136. K136 lines the dihydroxyacetone phosphate pocket. Y237 (proton donor/acceptor; for FBP aldolase activity) is an active-site residue. Mg(2+)-binding residues include K240, D241, and D242. The Schiff-base intermediate with DHAP; for FBP aldolase activity role is filled by K240. Residues 250-251 (QS), R274, D295, and Y357 contribute to the beta-D-fructose 1,6-bisphosphate site. The dihydroxyacetone phosphate site is built by R274 and D295.

Belongs to the FBP aldolase/phosphatase family. In terms of assembly, homooctamer; dimer of tetramers. The cofactor is Mg(2+).

The enzyme catalyses beta-D-fructose 1,6-bisphosphate = D-glyceraldehyde 3-phosphate + dihydroxyacetone phosphate. It catalyses the reaction beta-D-fructose 1,6-bisphosphate + H2O = beta-D-fructose 6-phosphate + phosphate. Its pathway is carbohydrate biosynthesis; gluconeogenesis. With respect to regulation, FBPase activity is inhibited by Ca(2+), ATP, ADP and phosphoenolpyruvate. In terms of biological role, catalyzes two subsequent steps in gluconeogenesis: the aldol condensation of dihydroxyacetone phosphate (DHAP) and glyceraldehyde-3-phosphate (GA3P) to fructose-1,6-bisphosphate (FBP), and the dephosphorylation of FBP to fructose-6-phosphate (F6P). Can also dephosphorylate, with lower activity, other related substrates including fructose-1-phosphate, fructose-6-phosphate, glucose-1-phosphate, glucose-6-phosphate, glycerol-2-phosphate, phosphoenolpyruvate, 5'-AMP, 6'-ADP and 7'-ATP. In Thermococcus onnurineus (strain NA1), this protein is Fructose-1,6-bisphosphate aldolase/phosphatase.